The following is a 394-amino-acid chain: MGDSSKKVKDSFDTISEPDSFDEPKGVPISMEPVFSTAAGIRIDVKQESIDKSKKMLNSDLKSKSSSKGGFSSPLVRKNNGSSAFVSPFRREGTSSTTTKRPASGGFEDFEAPPAKKSTSSSSKKSKKHSKKEKKKEFKEIHADVLRVSRIYEKDKFRIILQESSSTPLILATCSYNRGSDIKFGDRIHVDAEVCKKSSSGDVTEIYIDRVLKNKENGAKSGIRRHSIAKKPFCIKPRFIHELSDTKIKKTVVQVNLLDLNLDFYAGCSKCKHSLPEAANQCEFCKDSQGKSELSMYSRVRVMDFSGQMFINVTTKNMKKLLDLLGYEGFDNWFRFKDPQERQNYVFRPVMVEIEKSNDEWECTDVAEVDWKDFGSYLKHKEDKKKRRSKKKHP.

Basic and acidic residues predominate over residues 1–12 (MGDSSKKVKDSF). Disordered regions lie at residues 1–30 (MGDS…VPIS) and 56–136 (MLNS…EKKK). The segment at 1 to 60 (MGDSSKKVKDSFDTISEPDSFDEPKGVPISMEPVFSTAAGIRIDVKQESIDKSKKMLNSD) is interaction with rad-51. The tract at residues 28-62 (PISMEPVFSTAAGIRIDVKQESIDKSKKMLNSDLK) is BRCA2 repeat-like region. The span at 56–73 (MLNSDLKSKSSSKGGFSS) shows a compositional bias: low complexity. An interaction with rad-51-DNA complexes region spans residues 60-89 (DLKSKSSSKGGFSSPLVRKNNGSSAFVSPF). The span at 124–134 (KKSKKHSKKEK) shows a compositional bias: basic residues. Residues 371–389 (WKDFGSYLKHKEDKKKRRS) are required for ssDNA binding.

As to quaternary structure, interacts (via N-terminus) with rad-51; regulates rad-51 recruitment to sites of DNA double strand breaks. In terms of tissue distribution, expressed in the germline, with highest expression in cells undergoing oogenesis.

The protein localises to the nucleus. It localises to the chromosome. In terms of biological role, required for the homologous recombination repair of DNA double strand breaks, thereby playing a role in chromosome integrity. Acts by targeting rad-51 to sites of DNA damage and stabilizing rad-51-DNA filaments by blocking ATP hydrolysis catalyzed by rad-51. Promotes rad-51 mediated displacement-loop (D-loop) formation during strand invasion between the invading single-stranded DNA (ssDNA) and the homologous duplex DNA. Also functions independently of rad-51 in DNA double-strand break (DSB) repair by promoting DNA single-strand annealing (SSA) when the homologous recombination (HR) and non-homologous end joining (NHEJ) pathways are compromised. Binds selectively to single-stranded (ssDNA) via its C-terminus. Involved in telomere maintenance and replicative senescence. The protein is DNA repair protein brc-2 of Caenorhabditis elegans.